The chain runs to 305 residues: Endonuclease III-like protein 1 (305 aa).

The N-terminal 28 residues, 1–28 (MNAAGVRMVVTRARSRGTGASLRRRGEK), are a transit peptide targeting the mitochondrion. Positions 1–83 (MNAAGVRMVV…HLQAPSWQPQ (83 aa)) are disordered. Serine 64 is modified (phosphoserine). One can recognise a HhH domain in the interval 192 to 216 (RYDGDIPASVAELVALPGVGPKMAH). Residue lysine 213 is the Nucleophile; for N-glycosylase activity of the active site. 4 residues coordinate [4Fe-4S] cluster: cysteine 283, cysteine 290, cysteine 293, and cysteine 299.

The protein belongs to the Nth/MutY family. As to quaternary structure, interacts with YBX1. Interacts with ERCC5/XPG; the interaction stimulates NTHL1 activity and NTHL1 binding to its DNA substrate. Requires [4Fe-4S] cluster as cofactor.

The protein resides in the nucleus. It localises to the mitochondrion. It carries out the reaction 2'-deoxyribonucleotide-(2'-deoxyribose 5'-phosphate)-2'-deoxyribonucleotide-DNA = a 3'-end 2'-deoxyribonucleotide-(2,3-dehydro-2,3-deoxyribose 5'-phosphate)-DNA + a 5'-end 5'-phospho-2'-deoxyribonucleoside-DNA + H(+). In terms of biological role, bifunctional DNA N-glycosylase with associated apurinic/apyrimidinic (AP) lyase function that catalyzes the first step in base excision repair (BER), the primary repair pathway for the repair of oxidative DNA damage. The DNA N-glycosylase activity releases the damaged DNA base from DNA by cleaving the N-glycosidic bond, leaving an AP site. The AP lyase activity cleaves the phosphodiester bond 3' to the AP site by a beta-elimination. Primarily recognizes and repairs oxidative base damage of pyrimidines. The chain is Endonuclease III-like protein 1 from Bos taurus (Bovine).